A 137-amino-acid polypeptide reads, in one-letter code: MPTINQLVRKPRKSKVEKSKSPALNVGYNSRKKVQTNVSSPQKRGVATRVGTMTPKKPNSALRKFARVRLSNLIEVTAYIPGIGHNLQEHSVVLLRGGRVKDLPGVRYHIVRGALDTAGVNDRKQGRSKYGTKRPKG.

Residues 1 to 57 (MPTINQLVRKPRKSKVEKSKSPALNVGYNSRKKVQTNVSSPQKRGVATRVGTMTPKK) are disordered. 3-methylthioaspartic acid is present on D102.

It belongs to the universal ribosomal protein uS12 family. In terms of assembly, part of the 30S ribosomal subunit. Contacts proteins S8 and S17. May interact with IF1 in the 30S initiation complex.

With S4 and S5 plays an important role in translational accuracy. Functionally, interacts with and stabilizes bases of the 16S rRNA that are involved in tRNA selection in the A site and with the mRNA backbone. Located at the interface of the 30S and 50S subunits, it traverses the body of the 30S subunit contacting proteins on the other side and probably holding the rRNA structure together. The combined cluster of proteins S8, S12 and S17 appears to hold together the shoulder and platform of the 30S subunit. The chain is Small ribosomal subunit protein uS12 from Streptococcus suis (strain 98HAH33).